The primary structure comprises 463 residues: D(5)-like dopamine receptor (463 aa).

The Extracellular segment spans residues 1–39 (MENFYNETEPTEPRGGVDPLRVVTAAEDVPAPVGGVSVR). Asn-6 is a glycosylation site (N-linked (GlcNAc...) asparagine). Residues 40 to 65 (ALTGCVLCALIVSTLLGNTLVCAAVI) form a helical membrane-spanning segment. Residues 66-76 (KFRHLRSKVTN) are Cytoplasmic-facing. A helical membrane pass occupies residues 77–103 (AFVVSLAVSDLFVAVLVMPWRAVSEVA). Residues 104 to 112 (GVWLFGRFC) are Extracellular-facing. A disulfide bridge links Cys-112 with Cys-194. A helical transmembrane segment spans residues 113 to 135 (DTWVAFDIMCSTASILNLCVISM). At 136-154 (DRYWAISNPFRYERRMTRR) the chain is on the cytoplasmic side. A helical transmembrane segment spans residues 155–180 (FAFLMIAVAWTLSVLISFIPVQLNWH). Topologically, residues 181–198 (RADNNSSAHEQGDCNASL) are extracellular. Residues 199-223 (NRTYAISSSLISFYIPVLIMVGTYT) traverse the membrane as a helical segment. At 224 to 273 (RIFRIAQTQIRRISSLERAAGQRAQNQSHRASTHDESALKTSFKRETKVL) the chain is on the cytoplasmic side. The helical transmembrane segment at 274-301 (KTLSVIMGVFVFCWLPFFVLNCVVPFCD) threads the bilayer. Residues 302–315 (VDKVGEPPCVSDTT) lie on the Extracellular side of the membrane. A helical membrane pass occupies residues 316 to 337 (FNIFVWFGWANSSLNPVIYAFN). The Cytoplasmic portion of the chain corresponds to 338-463 (ADFRKAFTTI…PGQIQDLGDL (126 aa)).

This sequence belongs to the G-protein coupled receptor 1 family.

It is found in the cell membrane. Functionally, receptor for dopamine. The sequence is that of D(5)-like dopamine receptor (dl) from Takifugu rubripes (Japanese pufferfish).